The following is a 157-amino-acid chain: Transcription elongation factor GreA (157 aa).

Belongs to the GreA/GreB family.

Necessary for efficient RNA polymerase transcription elongation past template-encoded arresting sites. The arresting sites in DNA have the property of trapping a certain fraction of elongating RNA polymerases that pass through, resulting in locked ternary complexes. Cleavage of the nascent transcript by cleavage factors such as GreA or GreB allows the resumption of elongation from the new 3'terminus. GreA releases sequences of 2 to 3 nucleotides. In Maricaulis maris (strain MCS10) (Caulobacter maris), this protein is Transcription elongation factor GreA.